A 534-amino-acid chain; its full sequence is uncharacterized protein (534 aa).

Disordered regions lie at residues 1-93, 123-260, 313-349, and 383-505; these read MSSS…DDTG, SPES…LSSA, AAAT…TFPS, and PWGA…QGCP. Over residues 35 to 45 the composition is skewed to pro residues; it reads GPGPDPGPEPG. A phosphoserine mark is found at Ser87 and Ser123. Low complexity predominate over residues 145 to 161; that stretch reads RGAAAQRCGEAARAEAG. The segment covering 230 to 239 has biased composition (basic and acidic residues); that stretch reads SPKDPRDTPR.

This is an uncharacterized protein from Bos taurus (Bovine).